Consider the following 494-residue polypeptide: Zinc metalloproteinase/disintegrin (494 aa).

The signal sequence occupies residues 1–20 (MIQVLLVTICLAVFPFQGSS). The propeptide occupies 21-193 (KTLKSGNVND…KKASHLVATS (173 aa)). The Peptidase M12B domain occupies 201-396 (RYVQLVIVAD…HNPPCILNQA (196 aa)). Intrachain disulfides connect Cys-311–Cys-391, Cys-351–Cys-375, and Cys-353–Cys-358. His-336 is a Zn(2+) binding site. The active site involves Glu-337. Zn(2+) contacts are provided by His-340 and His-346. The propeptide occupies 410–431 (ELLQNSVNPCYDPVTCQPKEKE). The 62-residue stretch at 417–478 (NPCYDPVTCQ…DCPRNPYKGE (62 aa)) folds into the Disintegrin domain. Cystine bridges form between Cys-433–Cys-442, Cys-438–Cys-463, Cys-439–Cys-468, and Cys-451–Cys-470. The Cell attachment site motif lies at 455 to 457 (RGD). Positions 482–494 (MEWPAPAKGSVLM) are excised as a propeptide.

Belongs to the venom metalloproteinase (M12B) family. P-II subfamily. P-IIa sub-subfamily. As to quaternary structure, monomer (disintegrin). Expressed by the venom gland.

It is found in the secreted. Functionally, impairs hemostasis in the envenomed animal. Its function is as follows. Inhibits ADP-induced platelet aggregation (IC(50)=168 nM). Inhibits alpha-5/beta-1 (ITGA5/ITGB1) integrin and induces the expression of a ligand-induced binding site epitope on beta-1 integrin subunit. Has a direct chemotactic stimulus on human neutrophils in vitro. The polypeptide is Zinc metalloproteinase/disintegrin (Echis ocellatus (Ocellated saw-scaled viper)).